The following is an 88-amino-acid chain: Small ribosomal subunit protein bS20 (88 aa).

A compositionally biased stretch (basic and acidic residues) spans 1 to 17 (MANIKSNEKRLRQDIKR). Residues 1–25 (MANIKSNEKRLRQDIKRNLNNKGQK) are disordered.

The protein belongs to the bacterial ribosomal protein bS20 family.

In terms of biological role, binds directly to 16S ribosomal RNA. This chain is Small ribosomal subunit protein bS20, found in Mycoplasma genitalium (strain ATCC 33530 / DSM 19775 / NCTC 10195 / G37) (Mycoplasmoides genitalium).